The sequence spans 277 residues: Nickel transport system permease protein NikC (277 aa).

The Cytoplasmic segment spans residues 1–12; the sequence is MNFFLSSRWSVR. A helical membrane pass occupies residues 13-33; the sequence is LALIIIALLALIALTSQWWLP. The Periplasmic portion of the chain corresponds to 34–78; the sequence is YDPQAIDLPSRLLSPDAQHWLGTDHLGRDIFSRLMAATRVSLGSV. One can recognise an ABC transmembrane type-1 domain in the interval 67–260; that stretch reads LMAATRVSLG…ISVMAFNLVG (194 aa). Residues 79–99 traverse the membrane as a helical segment; it reads MACLLLVLTLGLVIGGSAGLI. Residues 100–120 lie on the Cytoplasmic side of the membrane; the sequence is GGRVDQATMRVADMFMTFPTS. Residues 121 to 141 traverse the membrane as a helical segment; it reads ILSFFMVGVLGTGLTNVIIAI. Residues 142–183 are Periplasmic-facing; the sequence is ALSHWAWYARMVRSLVISLRQREFVLASRLSGAGHVRVFVDH. A helical membrane pass occupies residues 184-204; the sequence is LAGAVIPSLLVLATLDIGHMM. Residues 205–207 lie on the Cytoplasmic side of the membrane; it reads LHV. A helical transmembrane segment spans residues 208–228; that stretch reads AGMSFLGLGVTAPTAEWGVMI. The Periplasmic portion of the chain corresponds to 229 to 239; the sequence is NDARQYIWTQP. The chain crosses the membrane as a helical span at residues 240–260; sequence LQMFWPGLALFISVMAFNLVG. The Cytoplasmic segment spans residues 261–277; that stretch reads DALRDHLDPHLVTEHAH.

It belongs to the binding-protein-dependent transport system permease family. OppBC subfamily. Probably forms a heterodimeric pore with NikB.

The protein localises to the cell inner membrane. Its function is as follows. Involved in a nickel transport system, probably translocates nickel through the bacterial inner membrane. The protein is Nickel transport system permease protein NikC (nikC) of Escherichia coli O157:H7.